Here is a 202-residue protein sequence, read N- to C-terminus: Matrix protein (202 aa).

The PPXY motif motif lies at 35–38 (PPEY). Positions 115–151 (KLRRTLIFQWAESHGPLEGEELEYSQEITWDDEAEFV) are essential for glycoprotein binding.

This sequence belongs to the lyssavirus matrix protein family. As to quaternary structure, homomultimer. Interacts with nucleoprotein and with the cytoplasmic domain of glycoprotein.

Its subcellular location is the virion membrane. The protein localises to the host endomembrane system. Functionally, plays a major role in assembly and budding of virion. Completely covers the ribonucleoprotein coil and keep it in condensed bullet-shaped form. Inhibits viral transcription and stimulates replication. Plays a major role in early induction of TRAIL-mediated apoptosis in infected neurons. The protein is Matrix protein (M) of Mokola virus (MOKV).